A 132-amino-acid polypeptide reads, in one-letter code: ER membrane protein complex subunit 5 (132 aa).

Over 1 to 3 the chain is Cytoplasmic; it reads MAS. A helical transmembrane segment spans residues 4-22; the sequence is SIWKGLVGIGLFALAHAAF. The Lumenal segment spans residues 23–43; the sequence is SAAQHRSYMRLTEKEDETLPI. The helical transmembrane segment at 44-63 threads the bilayer; it reads DIVLQTLLAFIVACYGIVHI. Topologically, residues 64–132 are cytoplasmic; that stretch reads AGEFKDMDAT…KLSKLESMHR (69 aa).

Belongs to the membrane magnesium transporter (TC 1.A.67) family. In terms of assembly, component of the ER membrane protein complex (EMC).

Its subcellular location is the endoplasmic reticulum membrane. It localises to the golgi apparatus membrane. The protein resides in the early endosome membrane. Part of the endoplasmic reticulum membrane protein complex (EMC) that enables the energy-independent insertion into endoplasmic reticulum membranes of newly synthesized membrane proteins. Preferentially accommodates proteins with transmembrane domains that are weakly hydrophobic or contain destabilizing features such as charged and aromatic residues. Involved in the cotranslational insertion of multi-pass membrane proteins in which stop-transfer membrane-anchor sequences become ER membrane spanning helices. It is also required for the post-translational insertion of tail-anchored/TA proteins in endoplasmic reticulum membranes. By mediating the proper cotranslational insertion of N-terminal transmembrane domains in an N-exo topology, with translocated N-terminus in the lumen of the ER, controls the topology of multi-pass membrane proteins like the G protein-coupled receptors. By regulating the insertion of various proteins in membranes, it is indirectly involved in many cellular processes. May be involved in Mg(2+) transport. The protein is ER membrane protein complex subunit 5 of Xenopus tropicalis (Western clawed frog).